The chain runs to 204 residues: uncharacterized protein (204 aa).

Positions 1-24 are cleaved as a signal peptide; that stretch reads MPINTFCKISLFICALFCSTVTLA.

This is an uncharacterized protein from Pasteurella multocida (strain Pm70).